The following is an 83-amino-acid chain: Mitochondrial import inner membrane translocase subunit Tim8 B (83 aa).

At alanine 2 the chain carries N-acetylalanine. Positions 36–59 (CWDKCVEKPGNRLDSRTENCLSSC) match the Twin CX3C motif motif. Disulfide bonds link cysteine 36-cysteine 59 and cysteine 40-cysteine 55.

Belongs to the small Tim family. In terms of assembly, heterohexamer; possibly composed of 3 copies of TIMM8B and 3 copies of TIMM13, named soluble 70 kDa complex. Associates with the TIM22 complex, whose core is composed of TIMM22. In terms of tissue distribution, ubiquitous, with highest expression in heart, kidney, liver and skeletal muscle.

It is found in the mitochondrion inner membrane. Probable mitochondrial intermembrane chaperone that participates in the import and insertion of some multi-pass transmembrane proteins into the mitochondrial inner membrane. Also required for the transfer of beta-barrel precursors from the TOM complex to the sorting and assembly machinery (SAM complex) of the outer membrane. Acts as a chaperone-like protein that protects the hydrophobic precursors from aggregation and guide them through the mitochondrial intermembrane space. In Homo sapiens (Human), this protein is Mitochondrial import inner membrane translocase subunit Tim8 B (TIMM8B).